The following is a 313-amino-acid chain: C-type lectin domain-containing protein 162 (313 aa).

The signal sequence occupies residues 1 to 17; it reads MNIFTLLFIYFLSDTVA. Residues asparagine 28 and asparagine 41 are each glycosylated (N-linked (GlcNAc...) asparagine). The region spanning 28–145 is the C-type lectin domain; the sequence is NATGCFQFFR…DAMFLPFVCE (118 aa). Cysteine 49 and cysteine 144 are oxidised to a cystine. N-linked (GlcNAc...) asparagine glycosylation is present at asparagine 213. The disordered stretch occupies residues 244–313; the sequence is VSQTETEMSR…RSKTIQISRG (70 aa). A compositionally biased stretch (basic and acidic residues) spans 250-259; sequence EMSRSRKEKE. N-linked (GlcNAc...) asparagine glycans are attached at residues asparagine 279 and asparagine 300. Basic and acidic residues predominate over residues 291–304; that stretch reads SKEKREREENETIR.

It localises to the secreted. This Caenorhabditis elegans protein is C-type lectin domain-containing protein 162 (clec-162).